The chain runs to 202 residues: Small ribosomal subunit protein uS4c (202 aa).

The 61-residue stretch at 90–150 (MRLDNVIFRL…NQRKSQAIIN (61 aa)) folds into the S4 RNA-binding domain.

It belongs to the universal ribosomal protein uS4 family. In terms of assembly, part of the 30S ribosomal subunit. Contacts protein S5. The interaction surface between S4 and S5 is involved in control of translational fidelity.

It is found in the plastid. The protein resides in the chloroplast. Its function is as follows. One of the primary rRNA binding proteins, it binds directly to 16S rRNA where it nucleates assembly of the body of the 30S subunit. With S5 and S12 plays an important role in translational accuracy. The sequence is that of Small ribosomal subunit protein uS4c (rps4) from Canalohypopterygium tamariscinum (Moss).